Here is a 508-residue protein sequence, read N- to C-terminus: POTE ankyrin domain family member G (508 aa).

ANK repeat units follow at residues 172 to 201 (QKRTALHLASANGNSEVVKLLLDRRCQLNI), 205 to 234 (KKRTALTKAVQCREDECALMLLEHGTDPNI), 238 to 267 (YGNTALHYAIYNEDKLMAKALLLYGADIES), 271 to 300 (HGLTPLLLGVHEQKQQVVKFLIKKKANLNA), and 304 to 333 (YGRTALILAVCCGSASIVSLLLEQNIDVSS). Residues 367 to 376 (KVSSENSNPE) show a composition bias toward polar residues. The interval 367-488 (KVSSENSNPE…QLSEEQNTGI (122 aa)) is disordered. Composition is skewed to basic and acidic residues over residues 377–392 (QDLKLTSEEESQRLKG) and 406–421 (EINKGGDRKVEEEMKK). The span at 476-488 (TQKQLSEEQNTGI) shows a compositional bias: polar residues.

The protein belongs to the POTE family.

This is POTE ankyrin domain family member G (POTEG) from Homo sapiens (Human).